Consider the following 472-residue polypeptide: MKAETPSFEAHQFVRVRRGDAVRRLIQRDKTPLAVLLMAAVVGTLAGLVGVAFEKSVNWVQNQRIGALAQVADHWYLVWPLAFILSALLAMVGYFLVRRFAPEAGGSGIPEIEGALEELRPVRWWRVLPVKFIGGMGTLGAGMVLGREGPMVQLGGNIGRMVLDIFRMRSPEARHTLLATGAASGLSAAFNAPLAGILFIIEEMRPQFRYNLISIKAVFTGVIMSSIVFRIFNGEAAIIEVGKLSNAPVNTLWLYLVLGMLFGCFGPLFNFLVLRTQDIFQRIHGGNIKTWVLMGGVIGGICGLLGLMQPSAVGGGFNLIPIAAAGNFSVGLLLFIFIARVVTTLICFSSGAPGGIFAPMLALGTLLGTAFGMAAIPLFPAYHLDAGTFAIAGMGALLAASVRAPLTGIVLVLEMTDNYQLILPMIITCLGATLLAQFLGGKPLYSTILQRTLAKQEAEQAAKAQQAPRENT.

Residues 1 to 32 (MKAETPSFEAHQFVRVRRGDAVRRLIQRDKTP) lie on the Cytoplasmic side of the membrane. The helical transmembrane segment at 33–69 (LAVLLMAAVVGTLAGLVGVAFEKSVNWVQNQRIGALA) threads the bilayer. Topologically, residues 70 to 76 (QVADHWY) are periplasmic. The chain crosses the membrane as a helical span at residues 77–100 (LVWPLAFILSALLAMVGYFLVRRF). The Selectivity filter part_1 signature appears at 106 to 110 (GSGIP). Serine 107 lines the chloride pocket. Positions 109-116 (IPEIEGAL) form an intramembrane region, helical. The Cytoplasmic portion of the chain corresponds to 117-123 (EELRPVR). 2 helical membrane passes run 124 to 141 (WWRV…TLGA) and 148 to 166 (EGPM…LDIF). A Selectivity filter part_2 motif is present at residues 146–150 (GREGP). The Cytoplasmic portion of the chain corresponds to 167 to 176 (RMRSPEARHT). 2 consecutive intramembrane regions (helical) follow at residues 177–189 (LLAT…LSAA) and 193–201 (PLAGILFII). Topologically, residues 202-214 (EEMRPQFRYNLIS) are cytoplasmic. Residues 215-232 (IKAVFTGVIMSSIVFRIF) form a helical membrane-spanning segment. Residues 233 to 252 (NGEAAIIEVGKLSNAPVNTL) are Periplasmic-facing. The chain crosses the membrane as a helical span at residues 253–281 (WLYLVLGMLFGCFGPLFNFLVLRTQDIFQ). At 282–287 (RIHGGN) the chain is on the cytoplasmic side. Residues 288-309 (IKTWVLMGGVIGGICGLLGLMQ) form a helical membrane-spanning segment. Residues 310 to 329 (PSAVGGGFNLIPIAAAGNFS) lie on the Periplasmic side of the membrane. 2 helical membrane-spanning segments follow: residues 330-349 (VGLL…ICFS) and 355-376 (GIFA…MAAI). A Selectivity filter part_3 motif is present at residues 355-359 (GIFAP). Chloride contacts are provided by isoleucine 356 and phenylalanine 357. Topologically, residues 377 to 386 (PLFPAYHLDA) are periplasmic. Residues 387 to 401 (GTFAIAGMGALLAAS) constitute an intramembrane region (helical). The segment at residues 402–404 (VRA) is an intramembrane region (note=Loop between two helices). Positions 405–416 (PLTGIVLVLEMT) form an intramembrane region, helical. The segment at residues 417 to 421 (DNYQL) is an intramembrane region (note=Loop between two helices). Residues 422 to 438 (ILPMIITCLGATLLAQF) form a helical membrane-spanning segment. The Cytoplasmic portion of the chain corresponds to 439–472 (LGGKPLYSTILQRTLAKQEAEQAAKAQQAPRENT). Tyrosine 445 provides a ligand contact to chloride.

It belongs to the chloride channel (TC 2.A.49) family. ClcA subfamily. In terms of assembly, homodimer.

The protein resides in the cell inner membrane. The enzyme catalyses 2 chloride(in) + H(+)(out) = 2 chloride(out) + H(+)(in). In terms of biological role, proton-coupled chloride transporter. Functions as antiport system and exchanges two chloride ions for 1 proton. Probably acts as an electrical shunt for an outwardly-directed proton pump that is linked to amino acid decarboxylation, as part of the extreme acid resistance (XAR) response. The chain is H(+)/Cl(-) exchange transporter ClcA from Klebsiella pneumoniae (strain 342).